The chain runs to 449 residues: Phosphoglucosamine mutase (449 aa).

Catalysis depends on Ser101, which acts as the Phosphoserine intermediate. Residues Ser101, Asp240, Asp242, and Asp244 each coordinate Mg(2+). Ser101 is modified (phosphoserine).

Belongs to the phosphohexose mutase family. Mg(2+) is required as a cofactor. Activated by phosphorylation.

The catalysed reaction is alpha-D-glucosamine 1-phosphate = D-glucosamine 6-phosphate. Catalyzes the conversion of glucosamine-6-phosphate to glucosamine-1-phosphate. The protein is Phosphoglucosamine mutase of Streptococcus mutans serotype c (strain ATCC 700610 / UA159).